Reading from the N-terminus, the 429-residue chain is Glucose-1-phosphate adenylyltransferase (429 aa).

Residues G162, 177–178 (EK), and S209 each bind alpha-D-glucose 1-phosphate.

Belongs to the bacterial/plant glucose-1-phosphate adenylyltransferase family. Homotetramer.

It carries out the reaction alpha-D-glucose 1-phosphate + ATP + H(+) = ADP-alpha-D-glucose + diphosphate. It participates in glycan biosynthesis; glycogen biosynthesis. Involved in the biosynthesis of ADP-glucose, a building block required for the elongation reactions to produce glycogen. Catalyzes the reaction between ATP and alpha-D-glucose 1-phosphate (G1P) to produce pyrophosphate and ADP-Glc. The sequence is that of Glucose-1-phosphate adenylyltransferase from Nostoc punctiforme (strain ATCC 29133 / PCC 73102).